An 897-amino-acid chain; its full sequence is Probable bifunctional chitinase/lysozyme (897 aa).

The signal sequence occupies residues 1-24; that stretch reads MKLNIFTKSMIGMGLVCSALPALA. Positions 25–91 constitute a Chitin-binding type-3 1 domain; sequence MEAWNNQQGG…SQFGNTLSCE (67 aa). 3 disordered regions span residues 90–127, 182–222, and 287–333; these read CEKS…SNSS, TEIS…PADK, and QYGN…DSVN. Over residues 95–111 the composition is skewed to low complexity; it reads SSSSSNSNTPASNTPAN. Composition is skewed to polar residues over residues 113 to 127 and 182 to 197; these read GSAT…SNSS and TEIS…TSAP. The Chitin-binding type-3 2 domain maps to 128-194; that stretch reads VVAWNKQQGG…SETSNPQSCT (67 aa). Residues 198–216 show a composition bias toward pro residues; the sequence is QPSPDVKPAPDVKPAPDVQ. The 67-residue stretch at 229-295 folds into the Chitin-binding type-3 3 domain; sequence VVAWKGQEGS…SQYGNPGSCS (67 aa). The segment covering 309–318 has biased composition (pro residues); it reads DPTPETPVTP. Residues 322–333 show a composition bias toward polar residues; sequence NSEPSTPADSVN. Chitin-binding type-3 domains are found at residues 337–403 and 459–529; these read LQAW…TTCE and AKAW…PQFN. The GH18 domain maps to 586-877; that stretch reads KHVYAPYVDF…TNLSPEFHGL (292 aa). C628 and C673 are oxidised to a cystine. The active-site Proton donor is E700.

This sequence belongs to the glycosyl hydrolase 18 family. Chitinase class II subfamily.

The protein resides in the periplasm. The enzyme catalyses Random endo-hydrolysis of N-acetyl-beta-D-glucosaminide (1-&gt;4)-beta-linkages in chitin and chitodextrins.. The catalysed reaction is Hydrolysis of (1-&gt;4)-beta-linkages between N-acetylmuramic acid and N-acetyl-D-glucosamine residues in a peptidoglycan and between N-acetyl-D-glucosamine residues in chitodextrins.. Its function is as follows. Bifunctional enzyme with lysozyme/chitinase activity. The protein is Probable bifunctional chitinase/lysozyme (chiA) of Escherichia coli (strain K12).